The following is a 77-amino-acid chain: Acyl carrier protein (77 aa).

The Carrier domain occupies 1-76 (MAVFEDVRDV…DVVNYIEKLG (76 aa)). O-(pantetheine 4'-phosphoryl)serine is present on Ser-36.

Belongs to the acyl carrier protein (ACP) family. Post-translationally, 4'-phosphopantetheine is transferred from CoA to a specific serine of apo-ACP by AcpS. This modification is essential for activity because fatty acids are bound in thioester linkage to the sulfhydryl of the prosthetic group.

The protein resides in the cytoplasm. The protein operates within lipid metabolism; fatty acid biosynthesis. In terms of biological role, carrier of the growing fatty acid chain in fatty acid biosynthesis. This Campylobacter concisus (strain 13826) protein is Acyl carrier protein.